A 318-amino-acid chain; its full sequence is Malonyl CoA-acyl carrier protein transacylase, mitochondrial (318 aa).

Belongs to the FabD family.

The protein resides in the mitochondrion. It catalyses the reaction holo-[ACP] + malonyl-CoA = malonyl-[ACP] + CoA. It participates in lipid metabolism; fatty acid biosynthesis. Involved in biosynthesis of fatty acids in mitochondria. The chain is Malonyl CoA-acyl carrier protein transacylase, mitochondrial (mct1) from Schizosaccharomyces pombe (strain 972 / ATCC 24843) (Fission yeast).